Consider the following 95-residue polypeptide: Embryonic abundant protein 1 (95 aa).

A compositionally biased stretch (polar residues) spans Met-1–Arg-10. Residues Met-1–Ser-95 are disordered. Composition is skewed to basic and acidic residues over residues Ala-40–Arg-64 and Gly-75–Ser-95.

This sequence belongs to the small hydrophilic plant seed protein family. As to expression, expressed in dry seeds and immature embryos.

Its function is as follows. Em protein may act as a cytoplasm protectant during desiccation. The protein is Embryonic abundant protein 1 (EMP1) of Oryza sativa subsp. japonica (Rice).